The sequence spans 404 residues: RING-H2 finger protein ATL11 (404 aa).

Residues 1–36 (MNPKGRTNLNRSIIGGHDHGSILQLLLFLLLLSSHG) form the signal peptide. Residues 64-84 (AILMIVLVSVFFFLGFFSVYI) form a helical membrane-spanning segment. The RING-type; atypical zinc finger occupies 144–186 (CSVCLNEFEDDETLRLIPKCCHVFHPGCIDAWLRSHTTCPLCR). 2 disordered regions span residues 339–361 (PYRT…VRAS) and 385–404 (VGEN…SNTV).

Belongs to the RING-type zinc finger family. ATL subfamily.

It localises to the membrane. It catalyses the reaction S-ubiquitinyl-[E2 ubiquitin-conjugating enzyme]-L-cysteine + [acceptor protein]-L-lysine = [E2 ubiquitin-conjugating enzyme]-L-cysteine + N(6)-ubiquitinyl-[acceptor protein]-L-lysine.. It functions in the pathway protein modification; protein ubiquitination. The sequence is that of RING-H2 finger protein ATL11 (ATL11) from Arabidopsis thaliana (Mouse-ear cress).